Consider the following 502-residue polypeptide: Maturase K (502 aa).

Belongs to the intron maturase 2 family. MatK subfamily.

The protein resides in the plastid. Its subcellular location is the chloroplast. In terms of biological role, usually encoded in the trnK tRNA gene intron. Probably assists in splicing its own and other chloroplast group II introns. This chain is Maturase K, found in Sisymbrium irio (London rocket).